The primary structure comprises 216 residues: Purine nucleoside phosphorylase DeoD-type (216 aa).

Phosphate is bound by residues Arg4, Arg23, and 67–70 (RVGT). A purine D-ribonucleoside contacts are provided by residues 159–161 (EME) and 183–184 (SD). Asp184 (proton donor) is an active-site residue.

This sequence belongs to the PNP/UDP phosphorylase family. As to quaternary structure, homohexamer; trimer of homodimers.

It catalyses the reaction a purine D-ribonucleoside + phosphate = a purine nucleobase + alpha-D-ribose 1-phosphate. It carries out the reaction a purine 2'-deoxy-D-ribonucleoside + phosphate = a purine nucleobase + 2-deoxy-alpha-D-ribose 1-phosphate. Functionally, catalyzes the reversible phosphorolytic breakdown of the N-glycosidic bond in the beta-(deoxy)ribonucleoside molecules, with the formation of the corresponding free purine bases and pentose-1-phosphate. This Streptococcus thermophilus protein is Purine nucleoside phosphorylase DeoD-type.